We begin with the raw amino-acid sequence, 227 residues long: MVYAIIVAAGEGKRAGFEIPKQFVKLNNKTILRMSAEKFQNSASIDKFLVVSHRNYVDLTEKEVKIFSKFENVVIGGSNRQESVYNALMYLGKKENKPDFVCIHDAVRPFVDTNKIDESIYKAKEIGGAVLAEMAENTISQVNNGRIVKTLERSQIYLHHTPQTFDFNKLLKAYQKAEKILSSFTDDASIFIHAGYETAIVEDYKNNIKLTKKEDFELAKCIFELNS.

This sequence belongs to the IspD/TarI cytidylyltransferase family. IspD subfamily.

It carries out the reaction 2-C-methyl-D-erythritol 4-phosphate + CTP + H(+) = 4-CDP-2-C-methyl-D-erythritol + diphosphate. The protein operates within isoprenoid biosynthesis; isopentenyl diphosphate biosynthesis via DXP pathway; isopentenyl diphosphate from 1-deoxy-D-xylulose 5-phosphate: step 2/6. In terms of biological role, catalyzes the formation of 4-diphosphocytidyl-2-C-methyl-D-erythritol from CTP and 2-C-methyl-D-erythritol 4-phosphate (MEP). The sequence is that of 2-C-methyl-D-erythritol 4-phosphate cytidylyltransferase from Petrotoga mobilis (strain DSM 10674 / SJ95).